The primary structure comprises 190 residues: Shikimate kinase (190 aa).

14-19 (GSGKST) is an ATP binding site. Ser-18 is a binding site for Mg(2+). 3 residues coordinate substrate: Asp-36, Arg-60, and Gly-82. Residue Arg-120 coordinates ATP. Position 147 (Arg-147) interacts with substrate.

It belongs to the shikimate kinase family. In terms of assembly, monomer. The cofactor is Mg(2+).

The protein localises to the cytoplasm. It catalyses the reaction shikimate + ATP = 3-phosphoshikimate + ADP + H(+). It functions in the pathway metabolic intermediate biosynthesis; chorismate biosynthesis; chorismate from D-erythrose 4-phosphate and phosphoenolpyruvate: step 5/7. Functionally, catalyzes the specific phosphorylation of the 3-hydroxyl group of shikimic acid using ATP as a cosubstrate. The sequence is that of Shikimate kinase from Chlorobium phaeobacteroides (strain DSM 266 / SMG 266 / 2430).